Consider the following 344-residue polypeptide: Transcription factor HRS1 (344 aa).

Positions 88 to 184 are disordered; that stretch reads IKDSSTSNEE…DGGGGRKQRR (97 aa). Residues 95–104 are compositionally biased toward acidic residues; that stretch reads NEEEDEEFDD. Composition is skewed to basic and acidic residues over residues 105 to 124 and 138 to 178; these read EHGN…KSDW and LLPK…DGGG. The HTH myb-type domain maps to 178 to 238; the sequence is GGRKQRRCWS…HLQKYRLHTR (61 aa). The segment at residues 209–234 is a DNA-binding region (H-T-H motif); sequence PKQIREFMKVDGLTNDEVKSHLQKYR. A compositionally biased stretch (low complexity) spans 269–291; the sequence is STGKTTGGATTSSTTTTTGIYGT. A disordered region spans residues 269-322; it reads STGKTTGGATTSSTTTTTGIYGTMAAPPPPQWPSHSNYRPSIIVDEGSGSHSEG.

As to expression, expressed in the root hair region and root hair cells.

Its subcellular location is the nucleus. Transcription factor involved in nitrate and phosphate signaling in roots. Integrates nitrate and phosphate starvation responses and adaptation of root architecture depending on nutrient availabilities. Acts downstream of the nitrate sensor and transporter NPF6.3/NRT1.1. Represses primary root development in response to phosphate deficiency conditions, only when nitrate is present. Involved in the modulation of primary root and root hair growth in phosphate-deprived environment. May be required for suppressing abscisic acid (ABA) signaling in germinating embryo axis, which promotes the timely germination of seeds. This chain is Transcription factor HRS1, found in Arabidopsis thaliana (Mouse-ear cress).